The sequence spans 295 residues: MERKLGTDRVKRGMAQMQKGGVIMDVVNSEQAKIAEQAGAVAVMALERVPSDIRAAGGVARMANPSLVEEIIQSVSIPVMAKARIGHIVEARVLESLGVDYIDESEVLTPADEVFHLNKSDYTVPFVCGCRDLGEAARRIGEGAAMLRTKGEPGTGNIVEAVRHIREVQAQVNKVVHMSKDELMTEAKNLGAPYEILLQIKENGRLPVVNFAAGGVATPADAALMMELGADGVFVGSGIFKSHHPEKFARAIVQATTYFDDYERIAEVSKDLGEAMTGIDVHSLAADQRMQERGW.

Asp25 contacts D-ribose 5-phosphate. The active-site Schiff-base intermediate with D-ribose 5-phosphate is Lys82. Gly154 contacts D-ribose 5-phosphate. Arg166 serves as a coordination point for D-glyceraldehyde 3-phosphate. D-ribose 5-phosphate is bound by residues Gly215 and 236–237; that span reads GS.

Belongs to the PdxS/SNZ family. In the presence of PdxT, forms a dodecamer of heterodimers.

It carries out the reaction aldehydo-D-ribose 5-phosphate + D-glyceraldehyde 3-phosphate + L-glutamine = pyridoxal 5'-phosphate + L-glutamate + phosphate + 3 H2O + H(+). Its pathway is cofactor biosynthesis; pyridoxal 5'-phosphate biosynthesis. Catalyzes the formation of pyridoxal 5'-phosphate from ribose 5-phosphate (RBP), glyceraldehyde 3-phosphate (G3P) and ammonia. The ammonia is provided by the PdxT subunit. Can also use ribulose 5-phosphate and dihydroxyacetone phosphate as substrates, resulting from enzyme-catalyzed isomerization of RBP and G3P, respectively. The sequence is that of Pyridoxal 5'-phosphate synthase subunit PdxS from Oceanobacillus iheyensis (strain DSM 14371 / CIP 107618 / JCM 11309 / KCTC 3954 / HTE831).